Here is a 165-residue protein sequence, read N- to C-terminus: Mid1-interacting protein 1-like (165 aa).

The segment at aspartate 46 to asparagine 67 is disordered.

It belongs to the SPOT14 family.

It is found in the nucleus. It localises to the cytoplasm. The protein localises to the cytoskeleton. In terms of biological role, involved in stabilization of microtubules. May play a role in the regulation of lipogenesis. The protein is Mid1-interacting protein 1-like of Danio rerio (Zebrafish).